The primary structure comprises 172 residues: Translation initiation factor IF-3 (172 aa).

It belongs to the IF-3 family. In terms of assembly, monomer.

The protein localises to the cytoplasm. Its function is as follows. IF-3 binds to the 30S ribosomal subunit and shifts the equilibrium between 70S ribosomes and their 50S and 30S subunits in favor of the free subunits, thus enhancing the availability of 30S subunits on which protein synthesis initiation begins. In Lactobacillus johnsonii (strain CNCM I-12250 / La1 / NCC 533), this protein is Translation initiation factor IF-3.